We begin with the raw amino-acid sequence, 447 residues long: Secretin receptor (447 aa).

The N-terminal stretch at 1-28 (MLSTMSPRLSLLLLWLLLLINAAHPVGA) is a signal peptide. The Extracellular portion of the chain corresponds to 29–140 (LPRLCDVRRV…NERRHAYLLK (112 aa)). Disulfide bonds link Cys46/Cys74, Cys65/Cys106, and Cys88/Cys122. Residues Asn71, Asn99, Asn105, and Asn127 are each glycosylated (N-linked (GlcNAc...) asparagine). Residues 141–166 (LKVMYTVGYSSSLAMLLVALSILCSF) traverse the membrane as a helical segment. The Cytoplasmic segment spans residues 167-173 (RRLHCTR). A helical transmembrane segment spans residues 174 to 194 (NYIHMHLFVSFILRALSNFIK). Residues 195-215 (DAVLFPADDVTYCDAHRAGCK) are Extracellular-facing. The cysteines at positions 214 and 284 are disulfide-linked. A helical transmembrane segment spans residues 216-238 (LVMIFFQYCIMANYAWLLVEGLY). Topologically, residues 239-253 (LHTLLAISFFSERKC) are cytoplasmic. A helical transmembrane segment spans residues 254-275 (LQAFVLFGWGSPAIFVALWAVT). Topologically, residues 276 to 290 (RHFLEDFGCWDINSN) are extracellular. N-linked (GlcNAc...) asparagine glycosylation occurs at Asn290. A helical transmembrane segment spans residues 291 to 314 (ASIWWVIRGPVILSIVINFIFFIN). Topologically, residues 315-339 (ILRILMRKLRTQETRGNETHHYKRL) are cytoplasmic. The helical transmembrane segment at 340-355 (AKSTLLLIPLFGIHYI) threads the bilayer. The Extracellular segment spans residues 356–366 (VFAFSPEGAME). The helical transmembrane segment at 367–390 (VQLFFELALGSFQGLVVAVLYCFL) threads the bilayer. The Cytoplasmic segment spans residues 391–447 (NGELEVQKKWRQWHLQEFPLRPVALSNSFSNATNGPTHSTKAGTSEQSRSIPGANVI). Residues 423–440 (TNGPTHSTKAGTSEQSRS) show a composition bias toward polar residues. The segment at 423 to 447 (TNGPTHSTKAGTSEQSRSIPGANVI) is disordered.

The protein belongs to the G-protein coupled receptor 2 family. Phosphorylated on Ser and Thr residues at the cytoplasmic C-terminus by G protein-coupled receptor kinases (GRKs). In terms of tissue distribution, in brain, expressed in the hippocampal CA1 region, the lower layer of cerebral cortex, the anterior olfactory nuclei, the anterior ventrolateral thalamus, the lateral region of hypothalamus, substantia nigra, tegmental area and central nucleus of the inferior colliculus, the ventral supramamillary nucleus and the cerebellum. Expressed in brown adipocytes: expression predominates in mature brown adipocytes (at protein level). Detected in the renal medulla, where it localized predominantly on the basolateral membranes of cells in the collecting ducts (blue arrow) and the ascending thick segments of the loop of Henle.

The protein resides in the cell membrane. It is found in the basolateral cell membrane. G protein-coupled receptor activated by secretin (SCT), which is involved in different processes such as regulation of the pH of the duodenal content, food intake and water homeostasis. Ligand binding causes a conformation change that triggers signaling via guanine nucleotide-binding proteins (G proteins) and activates cAMP-dependent pathway. Upon binding to secretin, regulates the pH of the duodenum by (1) inhibiting the secretion of gastric acid from the parietal cells of the stomach and (2) stimulating the production of bicarbonate (NaHCO(3)) from the ductal cells of the pancreas. In addition to regulating the pH of the duodenal content, plays a central role in diet induced thermogenesis: acts as a non-sympathetic brown fat (BAT) activator mediating prandial thermogenesis, which consequentially induces satiation. Mechanistically, secretin released by the gut after a meal binds to secretin receptor (SCTR) in brown adipocytes, activating brown fat thermogenesis by stimulating lipolysis, which is sensed in the brain and promotes satiation. Also able to stimulate lipolysis in white adipocytes. Also plays an important role in cellular osmoregulation by regulating renal water reabsorption. Also plays a role in the central nervous system: required for synaptic plasticity. In Mus musculus (Mouse), this protein is Secretin receptor.